The primary structure comprises 146 residues: Single-stranded DNA-binding protein, mitochondrial (146 aa).

Residues 1 to 22 (MQHTRRMLNPLLTGLRNLPARG) constitute a mitochondrion transit peptide. In terms of domain architecture, SSB spans 38–142 (VNTVTILGRV…IIADDVLFFR (105 aa)).

As to quaternary structure, homotetramer. In terms of tissue distribution, uniformly distributed in the early embryo. High levels detected in the anterior and posterior midgut primordia of stage 12 embryos. In larvae, high levels were detected in proliferating tissues including the CNS and digestive tract. In adults, highly expressed in the CNS, digestive tract and ovary.

Its subcellular location is the mitochondrion. Functionally, binds preferentially and cooperatively to pyrimidine rich single-stranded DNA (ss-DNA). Required to maintain the copy number of mitochondrial DNA (mtDNA) and plays crucial roles during mtDNA replication that stimulate activity of the gamma complex polymerase PolG1/tam at the replication fork. Promotes PolG1 activity largely by organizing the template DNA and eliminating secondary structures to favor ss-DNA conformations that facilitate PolG1 activity. This chain is Single-stranded DNA-binding protein, mitochondrial (mtSSB), found in Drosophila melanogaster (Fruit fly).